The chain runs to 1587 residues: NHS-like protein 1 (1587 aa).

Ser24 bears the Phosphoserine mark. Disordered regions lie at residues 140 to 163 and 176 to 202; these read FAAGSSPCDDYQDEDTEADRKCSL and RPKTPTSGDFSDLHTQTNWTKSLPLPT. The segment covering 179–196 has biased composition (polar residues); it reads TPTSGDFSDLHTQTNWTK. Phosphoserine is present on residues Ser197 and Ser328. Positions 431 to 446 are enriched in polar residues; that stretch reads SAGQLDSRTPGSSSYS. 2 disordered regions span residues 431–470 and 549–584; these read SAGQLDSRTPGSSSYSKIKPRDRPTPRCSVKDDHQSPRHH and SEPWEYKTSSNGRASPLKPHLATPGCSTPTSNVSSC. Residues 449-470 are compositionally biased toward basic and acidic residues; that stretch reads KPRDRPTPRCSVKDDHQSPRHH. The residue at position 563 (Ser563) is a Phosphoserine. A compositionally biased stretch (polar residues) spans 573 to 584; sequence GCSTPTSNVSSC. Residue Ser629 is modified to Phosphoserine. 3 disordered regions span residues 661–687, 705–767, and 789–1059; these read KAKKPPLPPSRTDSLRRIPKKNNQTNG, SLPG…SSVK, and NPTG…RPPM. A compositionally biased stretch (low complexity) spans 705 to 720; it reads SLPGKGGSSPSQSPCS. 4 stretches are compositionally biased toward polar residues: residues 730–750, 757–767, 792–801, and 838–855; these read SRSQSIVSEGSSLTSTTTPNV, TPSQSDTSSVK, GGCSANTEAA, and RVTSPSSGYSSQSNTPTA. The segment covering 885–911 has biased composition (low complexity); the sequence is SLISSMSISSSSTSLSSNTSTEGSGTM. 3 stretches are compositionally biased toward pro residues: residues 923-934, 958-972, and 998-1021; these read APPPPPLPPLPS, PLPPSPMFPPPPPEA, and SLPPVPAPPPFLPSSEPPPAPPLD. Basic and acidic residues predominate over residues 1040 to 1055; that stretch reads SSREALRRPANKEEGC. Position 1079 is a phosphoserine (Ser1079). Disordered regions lie at residues 1083–1534 and 1565–1587; these read AVLF…ARRA and VDGIGRAEGNGPSEQCGGTEQKS. Polar residues-rich tracts occupy residues 1089-1099 and 1112-1141; these read PSAQEQRTPTA and SRNSINEMESESQAASVTSSLPMPAKSQSQ. A phosphoserine mark is found at Ser1157 and Ser1218. The span at 1222 to 1234 shows a compositional bias: basic and acidic residues; the sequence is AEGEAVRSQEEKS. The span at 1275-1285 shows a compositional bias: polar residues; sequence QPNTSPGPTQE. Positions 1360-1370 are enriched in basic and acidic residues; the sequence is GRKDSEDDHTR. Phosphoserine occurs at positions 1373 and 1375. At Thr1379 the chain carries Phosphothreonine. The segment covering 1392-1409 has biased composition (polar residues); sequence QVGSIQRSIKKSTTSSDN. The segment covering 1434 to 1447 has biased composition (basic and acidic residues); sequence KSTDPRFQRSRSEP. 2 stretches are compositionally biased toward low complexity: residues 1448–1460 and 1484–1503; these read SADSPDSPSSCSP and SGPRYSRSRTPPSAASSRYS. The span at 1576–1587 shows a compositional bias: polar residues; the sequence is PSEQCGGTEQKS.

It belongs to the NHS family.

The polypeptide is NHS-like protein 1 (Nhsl1) (Mus musculus (Mouse)).